Consider the following 193-residue polypeptide: Interferon lambda-2 (193 aa).

A signal peptide spans 1 to 19 (MLLLLLPLLLAAVLTRTQA). N-linked (GlcNAc...) asparagine glycosylation is present at Asn105.

This sequence belongs to the lambda interferon family.

The protein resides in the secreted. In terms of biological role, cytokine with antiviral, antitumour and immunomodulatory activities. Plays a critical role in the antiviral host defense, predominantly in the epithelial tissues. Acts as a ligand for the heterodimeric class II cytokine receptor composed of IL10RB and IFNLR1, and receptor engagement leads to the activation of the JAK/STAT signaling pathway resulting in the expression of IFN-stimulated genes (ISG), which mediate the antiviral state. Has a restricted receptor distribution and therefore restricted targets: is primarily active in epithelial cells and this cell type-selective action is because of the epithelial cell-specific expression of its receptor IFNLR1. Seems not to be essential for early virus-activated host defense in vaginal infection, but plays an important role in Toll-like receptor (TLR)-induced antiviral defense. Plays a significant role in the antiviral immune defense in the intestinal epithelium. Exerts an immunomodulatory effect by up-regulating MHC class I antigen expression. This is Interferon lambda-2 (Ifnl2) from Mus musculus (Mouse).